Consider the following 101-residue polypeptide: Large ribosomal subunit protein uL24 (101 aa).

The protein belongs to the universal ribosomal protein uL24 family. As to quaternary structure, part of the 50S ribosomal subunit.

Functionally, one of two assembly initiator proteins, it binds directly to the 5'-end of the 23S rRNA, where it nucleates assembly of the 50S subunit. In terms of biological role, one of the proteins that surrounds the polypeptide exit tunnel on the outside of the subunit. The protein is Large ribosomal subunit protein uL24 of Cereibacter sphaeroides (strain ATCC 17025 / ATH 2.4.3) (Rhodobacter sphaeroides).